Reading from the N-terminus, the 225-residue chain is MEKKISIAIDGPAAAGKSTVAKRLAEALSYVYIDTGAMYRALTYCALQRGVDVHNEKQLMNVLHDTYIELKPSPSGQLVFANGENVTEAIRTNDVTNNVSYVAKHPAVREEMVKRQRELGQHGGVVMDGRDIGTHVLPHAEVKIFLLASVEERAKRRHEENVLRGIPSDFEQLKEEIARRDQIDSERAVAPLKKAEDAIEIDTTSLSIDEVVDRIMCIVQERVEG.

Position 11 to 19 (11 to 19 (GPAAAGKST)) interacts with ATP.

The protein belongs to the cytidylate kinase family. Type 1 subfamily.

Its subcellular location is the cytoplasm. The enzyme catalyses CMP + ATP = CDP + ADP. It catalyses the reaction dCMP + ATP = dCDP + ADP. The polypeptide is Cytidylate kinase (Anoxybacillus flavithermus (strain DSM 21510 / WK1)).